We begin with the raw amino-acid sequence, 314 residues long: Probable 5-dehydro-4-deoxyglucarate dehydratase (314 aa).

This sequence belongs to the DapA family.

The enzyme catalyses 5-dehydro-4-deoxy-D-glucarate + H(+) = 2,5-dioxopentanoate + CO2 + H2O. It participates in carbohydrate acid metabolism; D-glucarate degradation; 2,5-dioxopentanoate from D-glucarate: step 2/2. The chain is Probable 5-dehydro-4-deoxyglucarate dehydratase from Bradyrhizobium sp. (strain ORS 278).